The following is a 67-amino-acid chain: Non-specific lipid-transfer protein 2P (67 aa).

Intrachain disulfides connect Cys2–Cys34, Cys10–Cys24, Cys25–Cys60, and Cys36–Cys67.

Transfer lipids across membranes. May play a role in plant defense or in the biosynthesis of cuticle layers. In Triticum aestivum (Wheat), this protein is Non-specific lipid-transfer protein 2P.